A 388-amino-acid chain; its full sequence is Alanine racemase (388 aa).

Lysine 44 (proton acceptor; specific for D-alanine) is an active-site residue. Residue lysine 44 is modified to N6-(pyridoxal phosphate)lysine. Arginine 142 contacts substrate. The active-site Proton acceptor; specific for L-alanine is the tyrosine 273. Residue methionine 321 coordinates substrate.

This sequence belongs to the alanine racemase family. The cofactor is pyridoxal 5'-phosphate.

The enzyme catalyses L-alanine = D-alanine. It functions in the pathway amino-acid biosynthesis; D-alanine biosynthesis; D-alanine from L-alanine: step 1/1. Its function is as follows. Catalyzes the interconversion of L-alanine and D-alanine. May also act on other amino acids. The polypeptide is Alanine racemase (alr) (Mycobacterium avium (strain 104)).